Consider the following 251-residue polypeptide: Xylose/arabinose import ATP-binding protein XylG (251 aa).

The ABC transporter domain maps to 5-241 (LEIRDVHKSF…EITEVMTSFA (237 aa)). 37–44 (GDNGAGKS) lines the ATP pocket.

This sequence belongs to the ABC transporter superfamily. In terms of assembly, the complex is composed of two ATP-binding proteins (XylG), two transmembrane proteins (XylH) and a solute-binding protein (XylF).

It localises to the cell membrane. The enzyme catalyses D-xylose(out) + ATP + H2O = D-xylose(in) + ADP + phosphate + H(+). The catalysed reaction is L-arabinose(out) + ATP + H2O = L-arabinose(in) + ADP + phosphate + H(+). In terms of biological role, part of the ABC transporter complex XylFGH involved in the uptake of xylose and arabinose. Responsible for energy coupling to the transport system. The chain is Xylose/arabinose import ATP-binding protein XylG from Sulfolobus acidocaldarius (strain ATCC 33909 / DSM 639 / JCM 8929 / NBRC 15157 / NCIMB 11770).